Reading from the N-terminus, the 296-residue chain is MDKKPTIAILKNEIDKLKSSFDTEKDEKDTKINHILSVVEGLSKSLSLYIEDNDKETTNEEVNIDEIDKNIVKNLEDKVNCLEQDVQYLKNELKKKDADWQQKLDLIVHQFTKQYDSLKSSLLISQKETSVFQSVQNNSNLPNNSNLPIETPILQIKFAALTEYAQKPKRGSEFSAGIDLRSAYEYLVPANGNKLIKTDWKIQYPDGYFGKICSRSGLSLNHNLEVGAGIVDADYREGVSVVLNNLSPRDFHVAPGDRIAQLVCTPYITPEIVFCKPSDIPDTVRGKNGFGSTGIN.

Residues 66–102 (EIDKNIVKNLEDKVNCLEQDVQYLKNELKKKDADWQQ) are a coiled coil.

The protein belongs to the dUTPase family.

It catalyses the reaction dUTP + H2O = dUMP + diphosphate + H(+). It functions in the pathway pyrimidine metabolism; dUMP biosynthesis; dUMP from dCTP (dUTP route): step 2/2. Functionally, this enzyme is involved in nucleotide metabolism: it produces dUMP, the immediate precursor of thymidine nucleotides and it decreases the intracellular concentration of dUTP so that uracil cannot be incorporated into DNA. In Acheta domesticus (House cricket), this protein is Probable deoxyuridine 5'-triphosphate nucleotidohydrolase.